Consider the following 26-residue polypeptide: Thrombin-like enzyme LmrSP-3 (26 aa).

The protein belongs to the peptidase S1 family. Snake venom subfamily. In terms of tissue distribution, expressed by the venom gland.

It is found in the secreted. Its function is as follows. Thrombin-like snake venom serine protease that cleaves alpha-chain of fibrinogen (FGA) releases only fibrinopeptide A. Shows coagulant, esterase and amidase activities. This Lachesis muta rhombeata (Bushmaster) protein is Thrombin-like enzyme LmrSP-3.